We begin with the raw amino-acid sequence, 285 residues long: Polyamine aminopropyltransferase (285 aa).

The 237-residue stretch at 5-241 (DNWYIEHFQP…GWWSVTMASK (237 aa)) folds into the PABS domain. Gln-35 is an S-methyl-5'-thioadenosine binding site. Residues His-66 and Asp-90 each coordinate spermidine. S-methyl-5'-thioadenosine contacts are provided by residues Asp-110 and 141–142 (DG). Asp-160 acts as the Proton acceptor in catalysis. Position 160–163 (160–163 (DSTD)) interacts with spermidine. Residue Pro-167 participates in S-methyl-5'-thioadenosine binding.

Belongs to the spermidine/spermine synthase family. Homodimer or homotetramer.

It localises to the cytoplasm. The catalysed reaction is S-adenosyl 3-(methylsulfanyl)propylamine + putrescine = S-methyl-5'-thioadenosine + spermidine + H(+). Its pathway is amine and polyamine biosynthesis; spermidine biosynthesis; spermidine from putrescine: step 1/1. Functionally, catalyzes the irreversible transfer of a propylamine group from the amino donor S-adenosylmethioninamine (decarboxy-AdoMet) to putrescine (1,4-diaminobutane) to yield spermidine. This chain is Polyamine aminopropyltransferase, found in Xanthomonas campestris pv. campestris (strain 8004).